We begin with the raw amino-acid sequence, 347 residues long: D-alanine--D-alanine ligase (347 aa).

An ATP-grasp domain is found at 131-333 (KRVLESAGIA…YPKLIERLVD (203 aa)). 161–216 (EEKLAYPVFTKPSNMGSSVGISKSENQEELRQALKLAFRYDSRVLVEQGVNAREIE) contributes to the ATP binding site. Residues aspartate 287, glutamate 300, and asparagine 302 each contribute to the Mg(2+) site.

It belongs to the D-alanine--D-alanine ligase family. Requires Mg(2+) as cofactor. Mn(2+) is required as a cofactor.

It localises to the cytoplasm. The catalysed reaction is 2 D-alanine + ATP = D-alanyl-D-alanine + ADP + phosphate + H(+). It functions in the pathway cell wall biogenesis; peptidoglycan biosynthesis. In terms of biological role, cell wall formation. The sequence is that of D-alanine--D-alanine ligase from Streptococcus pneumoniae serotype 4 (strain ATCC BAA-334 / TIGR4).